The primary structure comprises 436 residues: MSVNYSEDNNRTAVVVGLQFGDEGKGKITDFLSESYDVVVRFNGGTNAGHTVVVGNETYKFHLLPSGSLRTKVVVLGSGMVIDPQSLISEIEIVKKNNSNLAVVVSSNAHVVTKIHKYLDVEEEKIRSSMVIGTTAQGIGPTYEDKYARSGLRMIDLLDYKTIIEKLDIIYRMHENLLSRSEFSDPSVRENLAKELYSYGQELKKYMYYTDILINKLYNEGRTILFEGAQGVLLDPDFGFYPYVTSSNTISASSYTGTGFSMRKIKKVIGVAKAYVSKVGAGPFPTELNDDLAKKIRDAGGEYGTTTGRPRRVGWLDVPLLKYAVQIDDVDEIALTKVDTLGILHTIKVCYSYELDGKQIDYIPKHISEVSRVKPLYEEFEGWGDLSSSLLHPKMRKWEIPQQLRRYIDFIEEQIGRPVTIISSGKDRSKTVRIER.

Residues 21-27 (GDEGKGK) and 49-51 (GHT) contribute to the GTP site. Catalysis depends on aspartate 22, which acts as the Proton acceptor. Residues aspartate 22 and glycine 49 each coordinate Mg(2+). Residues 22 to 25 (DEGK), 47 to 50 (NAGH), threonine 135, arginine 149, glutamine 230, threonine 245, and arginine 309 each bind IMP. Residue histidine 50 is the Proton donor of the active site. A substrate-binding site is contributed by 305–311 (TTTGRPR). Residues arginine 311, 337 to 339 (KVD), and 423 to 425 (SSG) contribute to the GTP site.

The protein belongs to the adenylosuccinate synthetase family. As to quaternary structure, homodimer. It depends on Mg(2+) as a cofactor.

It is found in the cytoplasm. It carries out the reaction IMP + L-aspartate + GTP = N(6)-(1,2-dicarboxyethyl)-AMP + GDP + phosphate + 2 H(+). Its pathway is purine metabolism; AMP biosynthesis via de novo pathway; AMP from IMP: step 1/2. Plays an important role in the de novo pathway of purine nucleotide biosynthesis. Catalyzes the first committed step in the biosynthesis of AMP from IMP. This Thermoplasma volcanium (strain ATCC 51530 / DSM 4299 / JCM 9571 / NBRC 15438 / GSS1) protein is Adenylosuccinate synthetase.